The chain runs to 101 residues: Signal recognition particle 19 kDa protein (101 aa).

The protein belongs to the SRP19 family. In terms of assembly, part of the signal recognition particle protein translocation system, which is composed of SRP and FtsY. Archaeal SRP consists of a 7S RNA molecule of 300 nucleotides and two protein subunits: SRP54 and SRP19.

It localises to the cytoplasm. Functionally, involved in targeting and insertion of nascent membrane proteins into the cytoplasmic membrane. Binds directly to 7S RNA and mediates binding of the 54 kDa subunit of the SRP. The protein is Signal recognition particle 19 kDa protein of Methanosarcina barkeri (strain Fusaro / DSM 804).